Here is a 539-residue protein sequence, read N- to C-terminus: Chaperonin GroEL (539 aa).

ATP contacts are provided by residues 29–32, 86–90, glycine 413, 476–478, and aspartate 492; these read TLGP, DGTTT, and NAA.

This sequence belongs to the chaperonin (HSP60) family. Forms a cylinder of 14 subunits composed of two heptameric rings stacked back-to-back. Interacts with the co-chaperonin GroES.

The protein resides in the cytoplasm. It carries out the reaction ATP + H2O + a folded polypeptide = ADP + phosphate + an unfolded polypeptide.. Together with its co-chaperonin GroES, plays an essential role in assisting protein folding. The GroEL-GroES system forms a nano-cage that allows encapsulation of the non-native substrate proteins and provides a physical environment optimized to promote and accelerate protein folding. This Parageobacillus thermoglucosidasius (Geobacillus thermoglucosidasius) protein is Chaperonin GroEL.